The sequence spans 364 residues: DNA polymerase IV (364 aa).

Residues 7–187 enclose the UmuC domain; sequence IIHVDMDAFY…LPVNRVPGVG (181 aa). Mg(2+) contacts are provided by Asp11 and Asp105. The active site involves Glu106.

Belongs to the DNA polymerase type-Y family. In terms of assembly, monomer. It depends on Mg(2+) as a cofactor.

It is found in the cytoplasm. The enzyme catalyses DNA(n) + a 2'-deoxyribonucleoside 5'-triphosphate = DNA(n+1) + diphosphate. In terms of biological role, poorly processive, error-prone DNA polymerase involved in untargeted mutagenesis. Copies undamaged DNA at stalled replication forks, which arise in vivo from mismatched or misaligned primer ends. These misaligned primers can be extended by PolIV. Exhibits no 3'-5' exonuclease (proofreading) activity. May be involved in translesional synthesis, in conjunction with the beta clamp from PolIII. This chain is DNA polymerase IV, found in Stenotrophomonas maltophilia (strain K279a).